The following is a 398-amino-acid chain: Succinate--CoA ligase [ADP-forming] subunit beta (398 aa).

The 245-residue stretch at 9–253 (KEILASYGVR…IREENPIEVE (245 aa)) folds into the ATP-grasp domain. ATP-binding positions include Lys50, 57 to 59 (GRG), Val106, and Glu116. Mg(2+) contacts are provided by Asn208 and Asp222. Residues Asn273 and 330 to 332 (GIV) contribute to the substrate site.

Belongs to the succinate/malate CoA ligase beta subunit family. In terms of assembly, heterotetramer of two alpha and two beta subunits. Requires Mg(2+) as cofactor.

It catalyses the reaction succinate + ATP + CoA = succinyl-CoA + ADP + phosphate. The catalysed reaction is GTP + succinate + CoA = succinyl-CoA + GDP + phosphate. Its pathway is carbohydrate metabolism; tricarboxylic acid cycle; succinate from succinyl-CoA (ligase route): step 1/1. In terms of biological role, succinyl-CoA synthetase functions in the citric acid cycle (TCA), coupling the hydrolysis of succinyl-CoA to the synthesis of either ATP or GTP and thus represents the only step of substrate-level phosphorylation in the TCA. The beta subunit provides nucleotide specificity of the enzyme and binds the substrate succinate, while the binding sites for coenzyme A and phosphate are found in the alpha subunit. This Flavobacterium psychrophilum (strain ATCC 49511 / DSM 21280 / CIP 103535 / JIP02/86) protein is Succinate--CoA ligase [ADP-forming] subunit beta.